A 187-amino-acid chain; its full sequence is Large ribosomal subunit protein uL5 (187 aa).

The protein belongs to the universal ribosomal protein uL5 family. Part of the 50S ribosomal subunit; part of the 5S rRNA/L5/L18/L25 subcomplex. Contacts the 5S rRNA and the P site tRNA. Forms a bridge to the 30S subunit in the 70S ribosome.

In terms of biological role, this is one of the proteins that bind and probably mediate the attachment of the 5S RNA into the large ribosomal subunit, where it forms part of the central protuberance. In the 70S ribosome it contacts protein S13 of the 30S subunit (bridge B1b), connecting the 2 subunits; this bridge is implicated in subunit movement. Contacts the P site tRNA; the 5S rRNA and some of its associated proteins might help stabilize positioning of ribosome-bound tRNAs. This is Large ribosomal subunit protein uL5 from Mycolicibacterium smegmatis (strain ATCC 700084 / mc(2)155) (Mycobacterium smegmatis).